A 432-amino-acid chain; its full sequence is MYQIFFFFLPLLHSYASAQTPPPFRNGDLVANFEPSLAVVTGVLAIMFALTFVLLVYAKCCHIDLRSGSGDRRRHDRRLRQGIFFNRSTASSDRFSGLDKTAIESLPLFRFSALKGSKQGLDCSVCLSKFESVEILRLLPKCRHAFHIGCIDQWLEQHATCPLCRDRVSMEEDSSVLTNGNSFRFLNQSEIREDSSLELYIEREEEEERIHREELSGSSRFSIGESFRKILKLGNKEKTLLDEHVNDKDEKKLMHKFNHRIVVSDVVFKNRWSNVSSSDLMFLNSEMVNSISSERFSSLDHVKRGDEEDQIGILRIKEEMEAKRMLENKLTSMTTMFSSENGDSGSKSRSVMIEPGRRSVSDITAVPRLSISIHGDCSGSAAETASALQNGGNETEERRRRLWLPIARKTAQWFANREKRSQINTTHQHFDV.

Residues 1–18 (MYQIFFFFLPLLHSYASA) form the signal peptide. The chain crosses the membrane as a helical span at residues 37–57 (LAVVTGVLAIMFALTFVLLVY). The RING-type; atypical zinc finger occupies 123 to 165 (CSVCLSKFESVEILRLLPKCRHAFHIGCIDQWLEQHATCPLCR).

Belongs to the RING-type zinc finger family. ATL subfamily.

The protein resides in the membrane. It carries out the reaction S-ubiquitinyl-[E2 ubiquitin-conjugating enzyme]-L-cysteine + [acceptor protein]-L-lysine = [E2 ubiquitin-conjugating enzyme]-L-cysteine + N(6)-ubiquitinyl-[acceptor protein]-L-lysine.. It functions in the pathway protein modification; protein ubiquitination. Functionally, E3 ubiquitin-protein ligase able to catalyze polyubiquitination with ubiquitin-conjugating enzyme E2 UBC8 in vitro. The protein is E3 ubiquitin-protein ligase ATL42 (ATL42) of Arabidopsis thaliana (Mouse-ear cress).